The following is a 797-amino-acid chain: N-acetylneuraminate (7)9-O-acetyltransferase (797 aa).

At 1 to 18 the chain is on the cytoplasmic side; that stretch reads MAALAYNLGKREINHYFS. The helical transmembrane segment at 19-39 threads the bilayer; the sequence is VRSAKVLALVAVLLLAACHLA. The Lumenal portion of the chain corresponds to 40–313; that stretch reads SRRYRGNDSC…QPRPPVTLIQ (274 aa). An N-linked (GlcNAc...) asparagine glycan is attached at Asn46. Residue Ser94 is the Acyl-ester intermediate of the active site. N-linked (GlcNAc...) asparagine glycosylation is found at Asn175 and Asn187. Active-site residues include Asp270 and His273. Residues 314-334 form a helical membrane-spanning segment; sequence KLAACFFTLSIIGYLIFYIIH. Residues 335 to 363 lie on the Cytoplasmic side of the membrane; it reads RNAHRKNKPCTDLESGEEKKNIINTPVSS. Residues 364–384 traverse the membrane as a helical segment; the sequence is LEILLQSFCKLGLIMAYFYMC. At 385-395 the chain is on the lumenal side; sequence DRANLFMKENK. Residues 396 to 416 traverse the membrane as a helical segment; sequence FYTHSSFFIPIIYILVLGVFY. At 417–439 the chain is on the cytoplasmic side; that stretch reads NENTKETKVLNREQTDEWKGWMQ. Residues 440–460 form a helical membrane-spanning segment; the sequence is LVILIYHISGASTFLPVYMHI. Residue Arg461 is a topological domain, lumenal. A helical membrane pass occupies residues 462–482; it reads VLVAAYLFQTGYGHFSYFWIK. Topologically, residues 483 to 486 are cytoplasmic; that stretch reads GDFG. A helical membrane pass occupies residues 487–507; that stretch reads IYRVCQVLFRLNFLVVVLCIV. Topologically, residues 508–513 are lumenal; that stretch reads MDRPYQ. A helical membrane pass occupies residues 514–534; the sequence is FYYFVPLVTVWFMVIYVTLAL. Over 535 to 547 the chain is Cytoplasmic; sequence WPQIIQKKANGNC. A helical transmembrane segment spans residues 548–568; the sequence is FWHFGLLLKLGFLLLFICFLA. Over 569-605 the chain is Lumenal; sequence YSQGAFEKIFSLWPLSKCFELKGNVYEWWFRWRLDRY. Residues 606–626 traverse the membrane as a helical segment; it reads VVFHGMLFAFIYLALQKRQIL. Residues 627-638 lie on the Cytoplasmic side of the membrane; that stretch reads SEGKGEPLFSNK. The chain crosses the membrane as a helical span at residues 639 to 659; the sequence is ISNFLLFISVVSFLTYSIWAS. Residues 660 to 671 lie on the Lumenal side of the membrane; the sequence is SCKNKAECNELH. A helical transmembrane segment spans residues 672 to 692; that stretch reads PSVSVVQILAFILIRNIPGYA. At 693–698 the chain is on the cytoplasmic side; it reads RSVYSS. Residues 699–719 traverse the membrane as a helical segment; that stretch reads FFAWFGKISLELFICQYHIWL. Residues 720–725 lie on the Lumenal side of the membrane; it reads AADTRG. A helical transmembrane segment spans residues 726 to 746; the sequence is ILVLIPGNPMLNIIVSTFIFV. Residues 747-770 lie on the Cytoplasmic side of the membrane; the sequence is CVAHEISQITNDLAQIIIPKDNSS. The helical transmembrane segment at 771-791 threads the bilayer; sequence LLKRLACIAAFFCGLLILSSI. The Lumenal portion of the chain corresponds to 792–797; that stretch reads QDKSKH.

It belongs to the PC-esterase family. CASD1 subfamily. N-glycosylated. As to expression, highly expressed in peripheral B lymphocytes.

It localises to the golgi apparatus membrane. It catalyses the reaction CMP-N-acetyl-beta-neuraminate + acetyl-CoA = CMP-N-acetyl-9-O-acetyl-beta-neuraminate + CoA. The enzyme catalyses a ganglioside GD3 (d18:1(4E)) + acetyl-CoA = a ganglioside Ac-O-7-GD3(d18:1(4E)) + CoA. The catalysed reaction is CMP-N-acetyl-beta-neuraminate + acetyl-CoA = CMP-N-acetyl-7-O-acetyl-beta-neuraminate + CoA. Functionally, key enzyme in the biosynthesis of O-acetylated (O-Ac) sialoglycans such as gangliosides O-AcGD3 and O-AcGD2, which affect various processes such as cell-cell interactions, host-pathogen recognition. Catalyzes the transfer of an acetyl group from a donor, the acetyl-coenzyme-A molecule (acetyl-CoA), to the C7/8/9 OH-position of a sialic acid residue. The primary site of O-acetyl group transfer on sialic acid seems to depend on cell type and can be C7, from which the O-acetyl group could subsequently migrate to the C8 and then to the C9 position, or at C9 with possibility of migrating to the C8 and then to the C7 position. Together with ST8SIA1 (GD3 synthase) it increases the levels of ganglioside Ac-O-7-GD3. Can transfer the acetyl group from acetyl-CoA to free sialate (N-acetylneuraminate, Neu5Ac) in vitro, but has preferred substrate specificity for CMP-activated sialate (CMP-Neu5Ac), resulting in the formation of 9-O-acetylated CMP-Neu5Ac (CMP-Neu5,9Ac2). CMP-Neu5,9Ac2 may be used by sialyltransferases as a sialate donor for glycoconjugate acceptors such as ganglioside GD3. O-acetylation at position C9 of ganglioside GD3 can counteract the pro-apoptotic effects of the ganglioside GD3 in tumor cells. This chain is N-acetylneuraminate (7)9-O-acetyltransferase, found in Homo sapiens (Human).